The primary structure comprises 638 residues: ATP-dependent rRNA helicase spb4 (638 aa).

The Q motif signature appears at 14 to 42 (WDAVNPPLSEWVLDAVSSMGFTRMTPVQA). Positions 45–249 (IPLFMAHKDV…RVGLRNPVKV (205 aa)) constitute a Helicase ATP-binding domain. Position 58 to 65 (58 to 65 (AVTGSGKT)) interacts with ATP. Positions 197 to 200 (DEAD) match the DEAD box motif. In terms of domain architecture, Helicase C-terminal spans 283 to 437 (ALKHILNSVQ…PITVSDAEAA (155 aa)). Residues 521 to 629 (AYKDKQREKR…AKADKDAEEG (109 aa)) are a coiled coil. The tract at residues 538 to 638 (MAESGQQQTT…GGDEEFTGFD (101 aa)) is disordered. A compositionally biased stretch (basic and acidic residues) spans 574-597 (MKQVRQERKRWEKMTEEEKKKALE). Acidic residues predominate over residues 625–638 (DAEEGGDEEFTGFD).

The protein belongs to the DEAD box helicase family. DDX55/SPB4 subfamily. In terms of assembly, component of pre-60S ribosomal complexes.

The protein resides in the nucleus. It is found in the nucleolus. It carries out the reaction ATP + H2O = ADP + phosphate + H(+). ATP-binding RNA helicase involved in the biogenesis of 60S ribosomal subunits. Binds 90S pre-ribosomal particles and dissociates from pre-60S ribosomal particles after processing of 27SB pre-rRNA. Required for the normal formation of 18S rRNA through the processing of pre-rRNAs at sites A0, A1 and A2, and the normal formation of 25S and 5.8S rRNAs through the processing of pre-rRNAs at sites C1 and C2. The sequence is that of ATP-dependent rRNA helicase spb4 from Emericella nidulans (strain FGSC A4 / ATCC 38163 / CBS 112.46 / NRRL 194 / M139) (Aspergillus nidulans).